The primary structure comprises 290 residues: ATP synthase gamma chain (290 aa).

This sequence belongs to the ATPase gamma chain family. F-type ATPases have 2 components, CF(1) - the catalytic core - and CF(0) - the membrane proton channel. CF(1) has five subunits: alpha(3), beta(3), gamma(1), delta(1), epsilon(1). CF(0) has three main subunits: a, b and c.

It localises to the cell membrane. Its function is as follows. Produces ATP from ADP in the presence of a proton gradient across the membrane. The gamma chain is believed to be important in regulating ATPase activity and the flow of protons through the CF(0) complex. The polypeptide is ATP synthase gamma chain (Buchnera aphidicola subsp. Schlechtendalia chinensis).